The primary structure comprises 657 residues: ABC1 family protein YPL109C, mitochondrial (657 aa).

A mitochondrion-targeting transit peptide spans 1-15 (MSFLKFAYRNSWRYY).

The protein belongs to the protein kinase superfamily. ADCK protein kinase family.

The protein resides in the mitochondrion. This is ABC1 family protein YPL109C, mitochondrial from Saccharomyces cerevisiae (strain ATCC 204508 / S288c) (Baker's yeast).